Consider the following 545-residue polypeptide: MQLPAMSCSPSQSSAAAAAAYGCCQRILLASTSLPATGRPARLGLKLRSTHSLQIRNRRFVCQAMTETEPDGDGNGDEEKEELGDDASSPSVYSVTQENGSAESETNADNTKDETVNTEPLSSSDTVQNIDGDATPASDAQENVEVVDVAVGSPLPGMKQQLDESVRIPKATIDILKDQVFGFDTFFVTSQEPYEGGILFKGNLRGQPAKSYEKITNRLQNKFGDQYKLFLLINPEDDKPVAVVVPRQTLQPETTAVPEWFAAASFGVVTIFTLLLRNVPLLQDNLLSTFDNLELLKDGVYGALVTAAIIGVHEIAHILAARDTGIKLAVPYFVPSWQIGSFGAITRIVNIVRNREDLLKVAAAGPLAGFSLGFVLLLLGFILPPSDGLGLVIDPAVFHESFLVGGLAKLILGDALKEGTKLSINPLVLWAWAGLLINAINSIPAGELDGGRIAFAMWGRKISSRISSLAIGLLGISALFNDVAFYWVVLIFFLQRGPISPLSEEITEPENNYISIGVAILLFGLLVCLPYPFPFDPSQLTDFDL.

The transit peptide at 1–63 (MQLPAMSCSP…QIRNRRFVCQ (63 aa)) directs the protein to the chloroplast. Residues 66–142 (TETEPDGDGN…DATPASDAQE (77 aa)) form a disordered region. The span at 68–85 (TEPDGDGNGDEEKEELGD) shows a compositional bias: acidic residues. Composition is skewed to polar residues over residues 88 to 109 (SSPS…TNAD) and 117 to 129 (NTEP…TVQN). 7 consecutive transmembrane segments (helical) span residues 256-276 (AVPE…TLLL), 300-320 (VYGA…HILA), 325-345 (GIKL…FGAI), 363-383 (AAGP…GFIL), 426-446 (PLVL…IPAG), 473-493 (LLGI…LIFF), and 513-533 (YISI…PYPF).

It belongs to the peptidase M50B family.

The protein resides in the plastid. The protein localises to the chloroplast membrane. Functionally, probable membrane-associated metalloprotease that may be involved in chloroplast development. The polypeptide is Probable zinc metalloprotease EGY2, chloroplastic (EGY2) (Oryza sativa subsp. indica (Rice)).